A 549-amino-acid chain; its full sequence is Membrane protein insertase YidC (549 aa).

Residues 6–26 traverse the membrane as a helical segment; it reads NLLLIGLLLVSFMLWQSWMVD. Residues 35 to 55 form a disordered region; the sequence is ATAESSVPASSGGDVPNQNDA. 4 helical membrane passes run 349 to 369, 424 to 444, 462 to 482, and 503 to 523; these read QFLHGLVGNWGVAIILITMIV, LGGCFPLLIQMPIFIALYWTL, LSVKDPYYVLPLLMGATMWYI, and PIVFTFMFLWFPSGLTLYWVV.

This sequence belongs to the OXA1/ALB3/YidC family. Type 1 subfamily. Interacts with the Sec translocase complex via SecD. Specifically interacts with transmembrane segments of nascent integral membrane proteins during membrane integration.

Its subcellular location is the cell inner membrane. Required for the insertion and/or proper folding and/or complex formation of integral membrane proteins into the membrane. Involved in integration of membrane proteins that insert both dependently and independently of the Sec translocase complex, as well as at least some lipoproteins. Aids folding of multispanning membrane proteins. This Tolumonas auensis (strain DSM 9187 / NBRC 110442 / TA 4) protein is Membrane protein insertase YidC.